Here is a 434-residue protein sequence, read N- to C-terminus: Putative magnesium transporter MRS2-D (434 aa).

Disordered stretches follow at residues 1–21, 126–171, and 279–311; these read MAAR…AAGE, AASP…DGEA, and EASE…AGGG. Positions 9 to 21 are enriched in low complexity; it reads AAGAGAPAPAAGE. Residues 279–291 show a composition bias toward basic and acidic residues; it reads EASELEDHSSRDE. 2 consecutive transmembrane segments (helical) span residues 367 to 387 and 405 to 425; these read GILL…TGVF and FPCA…AALL.

Belongs to the CorA metal ion transporter (MIT) (TC 1.A.35.5) family.

It localises to the membrane. In terms of biological role, putative magnesium transporter. This Oryza sativa subsp. indica (Rice) protein is Putative magnesium transporter MRS2-D (MRS2-D).